A 577-amino-acid polypeptide reads, in one-letter code: Putative pseudouridine synthase B0024.11 (577 aa).

D188 (nucleophile) is an active-site residue. Positions 265–472 (GFINYFGTQR…GESSRCLFVE (208 aa)) constitute a TRUD domain. The span at 538–565 (KAMRDASFKTRGDDEKTEENVLEEKGSD) shows a compositional bias: basic and acidic residues. The tract at residues 538–577 (KAMRDASFKTRGDDEKTEENVLEEKGSDDANELNLVSEDQ) is disordered.

It belongs to the pseudouridine synthase TruD family.

It carries out the reaction a uridine in tRNA = a pseudouridine in tRNA. In Caenorhabditis elegans, this protein is Putative pseudouridine synthase B0024.11.